Here is a 332-residue protein sequence, read N- to C-terminus: GTP 3',8-cyclase (332 aa).

One can recognise a Radical SAM core domain in the interval G9 to R220. R18 lines the GTP pocket. [4Fe-4S] cluster contacts are provided by C25 and C29. Y31 provides a ligand contact to S-adenosyl-L-methionine. C32 provides a ligand contact to [4Fe-4S] cluster. R67 is a GTP binding site. Position 71 (G71) interacts with S-adenosyl-L-methionine. T98 contributes to the GTP binding site. S-adenosyl-L-methionine is bound at residue S122. K159 is a binding site for GTP. Residue M193 participates in S-adenosyl-L-methionine binding. Positions 258 and 261 each coordinate [4Fe-4S] cluster. R263–R265 contacts GTP. [4Fe-4S] cluster is bound at residue C275.

It belongs to the radical SAM superfamily. MoaA family. As to quaternary structure, monomer and homodimer. The cofactor is [4Fe-4S] cluster.

The catalysed reaction is GTP + AH2 + S-adenosyl-L-methionine = (8S)-3',8-cyclo-7,8-dihydroguanosine 5'-triphosphate + 5'-deoxyadenosine + L-methionine + A + H(+). It participates in cofactor biosynthesis; molybdopterin biosynthesis. Its function is as follows. Catalyzes the cyclization of GTP to (8S)-3',8-cyclo-7,8-dihydroguanosine 5'-triphosphate. This chain is GTP 3',8-cyclase, found in Pseudomonas fluorescens (strain Pf0-1).